Here is a 1247-residue protein sequence, read N- to C-terminus: Clustered mitochondria protein homolog (1247 aa).

The disordered stretch occupies residues 1–43 (MTLGSETKTDVEVPIINGKHEIPQEENDSGHSSINTPDSSEPD). Residues 30–39 (GHSSINTPDS) are compositionally biased toward polar residues. The Clu domain occupies 329–579 (SDSLRAIELT…RSMPPDVHYL (251 aa)). Positions 1222–1247 (GKQQNGTTEESKTTDVAAQLDNETLD) are disordered.

Belongs to the CLU family.

Its subcellular location is the cytoplasm. MRNA-binding protein involved in proper cytoplasmic distribution of mitochondria. This chain is Clustered mitochondria protein homolog, found in Caenorhabditis elegans.